The sequence spans 344 residues: tRNA N6-adenosine threonylcarbamoyltransferase (344 aa).

Residues H112 and H116 each coordinate Fe cation. Substrate-binding positions include 134–138 (LASGG), D167, G180, and N280. A Fe cation-binding site is contributed by D308.

It belongs to the KAE1 / TsaD family. Fe(2+) serves as cofactor.

Its subcellular location is the cytoplasm. The catalysed reaction is L-threonylcarbamoyladenylate + adenosine(37) in tRNA = N(6)-L-threonylcarbamoyladenosine(37) in tRNA + AMP + H(+). Functionally, required for the formation of a threonylcarbamoyl group on adenosine at position 37 (t(6)A37) in tRNAs that read codons beginning with adenine. Is involved in the transfer of the threonylcarbamoyl moiety of threonylcarbamoyl-AMP (TC-AMP) to the N6 group of A37, together with TsaE and TsaB. TsaD likely plays a direct catalytic role in this reaction. This chain is tRNA N6-adenosine threonylcarbamoyltransferase, found in Rickettsia massiliae (strain Mtu5).